A 38-amino-acid polypeptide reads, in one-letter code: Glutathione S-transferase 2 (38 aa).

It belongs to the GST superfamily. Phi family.

The enzyme catalyses RX + glutathione = an S-substituted glutathione + a halide anion + H(+). In terms of biological role, conjugation of reduced glutathione to a wide number of exogenous and endogenous hydrophobic electrophiles. In plants, may have a detoxification role against certain herbicides. The polypeptide is Glutathione S-transferase 2 (Populus euphratica (Euphrates poplar)).